The chain runs to 572 residues: Hemagglutinin-neuraminidase (572 aa).

The Intravirion segment spans residues 1 to 31 (MEYWKHTNHRKDAGNELETSMATHGNKLTNK). Residues 32–52 (ITYILWTIILVLLSIVLIIVL) traverse the membrane as a helical segment. Topologically, residues 53 to 572 (INSIKSEKAH…FKTEVPKSCS (520 aa)) are virion surface. Cystine bridges form between C190-C214 and C256-C269. An involved in neuraminidase activity region spans residues 252-257 (NRKSCS). N-linked (GlcNAc...) asparagine; by host glycans are attached at residues N308 and N351. 2 disulfides stabilise this stretch: C355–C469 and C463–C473. An N-linked (GlcNAc...) asparagine; by host glycan is attached at N523. C535 and C544 are joined by a disulfide.

The protein belongs to the paramyxoviruses hemagglutinin-neuraminidase family. As to quaternary structure, homotetramer; composed of disulfide-linked homodimers. Interacts with F protein trimer.

Its subcellular location is the virion membrane. It is found in the host cell membrane. It catalyses the reaction Hydrolysis of alpha-(2-&gt;3)-, alpha-(2-&gt;6)-, alpha-(2-&gt;8)- glycosidic linkages of terminal sialic acid residues in oligosaccharides, glycoproteins, glycolipids, colominic acid and synthetic substrates.. Functionally, attaches the virus to sialic acid-containing cell receptors and thereby initiating infection. Binding of HN protein to the receptor induces a conformational change that allows the F protein to trigger virion/cell membranes fusion. Neuraminidase activity ensures the efficient spread of the virus by dissociating the mature virions from the neuraminic acid containing glycoproteins. The chain is Hemagglutinin-neuraminidase (HN) from Human parainfluenza 3 virus (strain Tex/9305/82) (HPIV-3).